The following is a 377-amino-acid chain: uncharacterized protein (377 aa).

Residues 21–43 (YFISFSALFLIAYMFVAAVPLGA) traverse the membrane as a helical segment.

Its subcellular location is the membrane. This is an uncharacterized protein from Treponema pallidum (strain Nichols).